Reading from the N-terminus, the 314-residue chain is MIOREX complex component 8 (314 aa).

Residues threonine 132–leucine 312 form the EngB-type G domain. GTP contacts are provided by residues glycine 140–serine 147, glycine 173–threonine 177, aspartate 191–glycine 194, threonine 253–aspartate 256, and serine 290–threonine 292. Mg(2+)-binding residues include serine 147 and threonine 175.

Belongs to the TRAFAC class TrmE-Era-EngA-EngB-Septin-like GTPase superfamily. EngB GTPase family. Associates with the mitochondrial ribosome. Mg(2+) is required as a cofactor. Sumoylated upon ethanol stress.

The protein localises to the mitochondrion. Its function is as follows. Component of MIOREX complexes, large expressome-like assemblies of ribosomes with factors involved in all the steps of post-transcriptional gene expression. This Saccharomyces cerevisiae (strain ATCC 204508 / S288c) (Baker's yeast) protein is MIOREX complex component 8.